Here is a 467-residue protein sequence, read N- to C-terminus: uncharacterized protein (467 aa).

9 Sel1-like repeats span residues Pro-38 to His-73, Pro-107 to Asn-138, Pro-139 to Leu-172, Pro-173 to Tyr-208, Pro-240 to His-275, Pro-276 to Ser-311, Ala-343 to His-378, Ser-379 to Asp-414, and Ser-415 to Tyr-450.

This is an uncharacterized protein from Neisseria meningitidis serogroup B (strain ATCC BAA-335 / MC58).